A 229-amino-acid chain; its full sequence is Transmembrane protein 182 (229 aa).

Positions 1 to 26 (MRLNIAIFFGALFGALGVLLFLVAFG) are cleaved as a signal peptide. Residues 27–114 (SDYWLLATEV…SYDSAVIYRG (88 aa)) are Extracellular-facing. An N-linked (GlcNAc...) asparagine glycan is attached at Asn47. The interaction with ITGB1 stretch occupies residues 49–59 (TFHHEGFFWRC). Asn102 carries N-linked (GlcNAc...) asparagine glycosylation. A helical membrane pass occupies residues 115 to 135 (FWAVLMLLGVVAVVIASFLII). The Cytoplasmic portion of the chain corresponds to 136–153 (CAAPFASHFLYKAGGGSY). Residues 154–174 (IAAGILFSLVVMLYVIWVQAV) form a helical membrane-spanning segment. The Extracellular segment spans residues 175–200 (ADMESYRNMKMKDCLDFTPSVLYGWS). A helical membrane pass occupies residues 201 to 221 (FFLAPAGIFFSLLAGLLFLVV). Over 222-229 (GWHIQIHH) the chain is Cytoplasmic.

It belongs to the TMEM182 family. Interacts with ITGB1.

It localises to the cell membrane. Functionally, negatively regulates myogenesis and skeletal muscle regeneration via its association with ITGB1. Modulates ITGB1 activation by decreasing ITGB1-LAMB1 interaction and inhibiting ITGB1-mediated intracellular signaling during myogenesis. The polypeptide is Transmembrane protein 182 (TMEM182) (Homo sapiens (Human)).